A 308-amino-acid chain; its full sequence is 1,4-dihydroxy-2-naphthoate octaprenyltransferase (308 aa).

The next 9 membrane-spanning stretches (helical) occupy residues 22-42 (TLPL…WANP), 47-67 (GLVM…SNFA), 101-121 (WGLI…IGIA), 129-149 (FAFA…TVGV), 153-173 (GYMG…GVGG), 186-206 (IILP…INNL), 235-255 (ILLS…AISW), 256-276 (TNYL…FVYC), and 286-306 (ILAQ…LGLL).

The protein belongs to the MenA family. Type 1 subfamily.

The protein localises to the cell inner membrane. The catalysed reaction is an all-trans-polyprenyl diphosphate + 1,4-dihydroxy-2-naphthoate + H(+) = a 2-demethylmenaquinol + CO2 + diphosphate. It participates in quinol/quinone metabolism; menaquinone biosynthesis; menaquinol from 1,4-dihydroxy-2-naphthoate: step 1/2. Conversion of 1,4-dihydroxy-2-naphthoate (DHNA) to demethylmenaquinone (DMK). The polypeptide is 1,4-dihydroxy-2-naphthoate octaprenyltransferase (Haemophilus influenzae (strain ATCC 51907 / DSM 11121 / KW20 / Rd)).